The primary structure comprises 68 residues: Large ribosomal subunit protein bL33c (68 aa).

It belongs to the bacterial ribosomal protein bL33 family.

Its subcellular location is the plastid. The protein localises to the chloroplast. In Lactuca sativa (Garden lettuce), this protein is Large ribosomal subunit protein bL33c.